A 628-amino-acid chain; its full sequence is tRNA uridine 5-carboxymethylaminomethyl modification enzyme MnmG 1 (628 aa).

11 to 16 is an FAD binding site; that stretch reads GAGHAG. 280-294 serves as a coordination point for NAD(+); sequence GPRHCPSIDRKVLNF.

Belongs to the MnmG family. Homodimer. Heterotetramer of two MnmE and two MnmG subunits. It depends on FAD as a cofactor.

Its subcellular location is the cytoplasm. NAD-binding protein involved in the addition of a carboxymethylaminomethyl (cmnm) group at the wobble position (U34) of certain tRNAs, forming tRNA-cmnm(5)s(2)U34. The polypeptide is tRNA uridine 5-carboxymethylaminomethyl modification enzyme MnmG 1 (Fusobacterium nucleatum subsp. nucleatum (strain ATCC 25586 / DSM 15643 / BCRC 10681 / CIP 101130 / JCM 8532 / KCTC 2640 / LMG 13131 / VPI 4355)).